We begin with the raw amino-acid sequence, 135 residues long: MADNFNFELVSPERLLLSEMVTEVVVPATEGEMTVMANHAPTMTTIKPGVVSVRSASGKKQDYVVFGGFADILPTGCTLLAESAVPVEELHKDELTRRIEAARKELEHAELHEHKSRLEHFIMELTHLRGIVQQD.

This sequence belongs to the ATPase epsilon chain family. F-type ATPases have 2 components, CF(1) - the catalytic core - and CF(0) - the membrane proton channel. CF(1) has five subunits: alpha(3), beta(3), gamma(1), delta(1), epsilon(1). CF(0) has three main subunits: a, b and c.

The protein localises to the cell inner membrane. Functionally, produces ATP from ADP in the presence of a proton gradient across the membrane. In Rhizobium etli (strain ATCC 51251 / DSM 11541 / JCM 21823 / NBRC 15573 / CFN 42), this protein is ATP synthase epsilon chain.